We begin with the raw amino-acid sequence, 120 residues long: Large ribosomal subunit protein eL8 (120 aa).

The protein belongs to the eukaryotic ribosomal protein eL8 family. In terms of assembly, part of the 50S ribosomal subunit. Probably part of the RNase P complex.

The protein resides in the cytoplasm. Multifunctional RNA-binding protein that recognizes the K-turn motif in ribosomal RNA, the RNA component of RNase P, box H/ACA, box C/D and box C'/D' sRNAs. The sequence is that of Large ribosomal subunit protein eL8 from Halorubrum lacusprofundi (strain ATCC 49239 / DSM 5036 / JCM 8891 / ACAM 34).